Here is a 95-residue protein sequence, read N- to C-terminus: MVREAAMLHIKEGLEQEFEDAFRQAAPIISGMKGYITHSLSKCMEETHKYLLLVEWETLEDHTEGFRGSSEYQEWKALLHRFYTPFPTVEHFQDV.

An ABM domain is found at 2–92; sequence VREAAMLHIK…YTPFPTVEHF (91 aa).

This is an uncharacterized protein from Bacillus subtilis (strain 168).